The following is a 590-amino-acid chain: Potassium-transporting ATPase potassium-binding subunit (590 aa).

12 helical membrane-spanning segments follow: residues 3 to 23 (AFLL…KPLG), 63 to 83 (HYAL…YALQ), 134 to 154 (GLAV…IALI), 177 to 197 (VYVL…QGVI), 284 to 304 (FVQM…FGGM), 312 to 332 (WAVL…LAWA), 359 to 379 (FGIV…CGAV), 388 to 408 (ALGG…FGGV), 411 to 431 (GLYG…LMIG), 451 to 471 (IAIL…VVVT), 515 to 535 (LALG…VLAM), and 558 to 578 (LFVV…YIPA).

Belongs to the KdpA family. In terms of assembly, the system is composed of three essential subunits: KdpA, KdpB and KdpC.

The protein localises to the cell inner membrane. In terms of biological role, part of the high-affinity ATP-driven potassium transport (or Kdp) system, which catalyzes the hydrolysis of ATP coupled with the electrogenic transport of potassium into the cytoplasm. This subunit binds the periplasmic potassium ions and delivers the ions to the membrane domain of KdpB through an intramembrane tunnel. This is Potassium-transporting ATPase potassium-binding subunit from Ralstonia pickettii (strain 12J).